We begin with the raw amino-acid sequence, 62 residues long: Guanine nucleotide-binding protein subunit gamma (62 aa).

Cys-59 carries the cysteine methyl ester modification. The S-geranylgeranyl cysteine moiety is linked to residue Cys-59. A propeptide spans 60-62 (SVL) (removed in mature form).

It belongs to the G protein gamma family. As to quaternary structure, g proteins are composed of 3 units, alpha, beta and gamma. Interacts with gpb-1 and gpb-2.

The protein localises to the cell membrane. Guanine nucleotide-binding proteins (G proteins) are involved as a modulator or transducer in various transmembrane signaling systems. The beta and gamma chains are required for the GTPase activity, for replacement of GDP by GTP, and for G protein-effector interaction. The polypeptide is Guanine nucleotide-binding protein subunit gamma (gpc-1) (Caenorhabditis briggsae).